Reading from the N-terminus, the 850-residue chain is Polyhomeotic-like protein 2 (850 aa).

Disordered stretches follow at residues methionine 1–glutamine 79, glutamine 233–proline 314, leucine 335–leucine 386, threonine 402–arginine 436, and methionine 528–glutamine 553. The span at serine 15 to serine 32 shows a compositional bias: low complexity. The interval serine 33–aspartate 56 is interaction with BMI1. The segment covering proline 343–glutamine 352 has biased composition (low complexity). Composition is skewed to polar residues over residues leucine 368–serine 380 and threonine 402–glycine 425. The segment covering threonine 529 to alanine 543 has biased composition (low complexity). The HD1 signature appears at lysine 550–valine 579. Glycyl lysine isopeptide (Lys-Gly) (interchain with G-Cter in SUMO2) cross-links involve residues lysine 590 and lysine 592. Positions phenylalanine 597–lysine 624 are disordered. Residue threonine 611 is modified to Phosphothreonine. Phosphoserine is present on serine 613. A Glycyl lysine isopeptide (Lys-Gly) (interchain with G-Cter in SUMO2) cross-link involves residue lysine 624. An FCS-type zinc finger spans residues glutamate 625–lysine 659. The Zn(2+) site is built by cysteine 634, cysteine 637, cysteine 653, and cysteine 657. Disordered stretches follow at residues arginine 676–valine 712 and serine 725–proline 764. Lysine 694 is covalently cross-linked (Glycyl lysine isopeptide (Lys-Gly) (interchain with G-Cter in SUMO2)). The segment covering serine 696–valine 712 has biased composition (polar residues). Phosphoserine is present on serine 743. An SAM domain is found at tryptophan 786 to serine 850. Residue lysine 839 forms a Glycyl lysine isopeptide (Lys-Gly) (interchain with G-Cter in SUMO2) linkage.

As to quaternary structure, component of a PRC1-like complex. Interacts with CBX4. Interacts with BMI1, PCGF2, PHC1 and RNF2. Interacts with CHTOP. Interacts with the N-terminal region of the SP1 transcription factor and with MAPKAPK2. Interacts with SAMD7. Interacts with SAMD11. Isoform 2 is ubiquitously expressed in embryos and adult tissues at much higher level than isoform 1.

The protein localises to the nucleus. Functionally, component of a Polycomb group (PcG) multiprotein PRC1-like complex, a complex class required to maintain the transcriptionally repressive state of many genes, including Hox genes, throughout development. PcG PRC1 complex acts via chromatin remodeling and modification of histones; it mediates monoubiquitination of histone H2A 'Lys-119', rendering chromatin heritably changed in its expressibility. This Mus musculus (Mouse) protein is Polyhomeotic-like protein 2 (Phc2).